A 231-amino-acid chain; its full sequence is 2-C-methyl-D-erythritol 4-phosphate cytidylyltransferase (231 aa).

The protein belongs to the IspD/TarI cytidylyltransferase family. IspD subfamily.

It carries out the reaction 2-C-methyl-D-erythritol 4-phosphate + CTP + H(+) = 4-CDP-2-C-methyl-D-erythritol + diphosphate. Its pathway is isoprenoid biosynthesis; isopentenyl diphosphate biosynthesis via DXP pathway; isopentenyl diphosphate from 1-deoxy-D-xylulose 5-phosphate: step 2/6. In terms of biological role, catalyzes the formation of 4-diphosphocytidyl-2-C-methyl-D-erythritol from CTP and 2-C-methyl-D-erythritol 4-phosphate (MEP). The protein is 2-C-methyl-D-erythritol 4-phosphate cytidylyltransferase of Pseudoalteromonas atlantica (strain T6c / ATCC BAA-1087).